Here is a 62-residue protein sequence, read N- to C-terminus: Small ribosomal subunit protein eS17 (62 aa).

The protein belongs to the eukaryotic ribosomal protein eS17 family.

This chain is Small ribosomal subunit protein eS17, found in Methanocaldococcus jannaschii (strain ATCC 43067 / DSM 2661 / JAL-1 / JCM 10045 / NBRC 100440) (Methanococcus jannaschii).